The sequence spans 251 residues: WUSCHEL-related homeobox 4 (251 aa).

Disordered stretches follow at residues 1–21 (MKVH…DSTS) and 33–93 (LAPK…RWNP). Over residues 11–21 (SSSWDQHDSTS) the composition is skewed to low complexity. The span at 71 to 83 (KFEHKRDPPHQLE) shows a compositional bias: basic and acidic residues. Positions 86-150 (PGGTRWNPTQ…NHKARERQKQ (65 aa)) form a DNA-binding region, homeobox; WUS-type.

This sequence belongs to the WUS homeobox family. In terms of tissue distribution, expressed in the vasculature of the whole plant (roots, hypocotyls, cotyledons and leaves), trichomes and stomata. Expresse in the developing vascular bundles of root and shoot lateral organs.

The protein localises to the nucleus. Its function is as follows. Promotes differentiation and/or maintenance of the vascular procambium, the initial cells of the developing vasculature. Part of the TDIF-TDR-WOX4 signaling pathway that plays a crucial role in the maintenance of the vascular meristem organization during secondary growth. Is required for promoting the proliferation of procambial/cambial stem cells but not for repressing their commitment to xylem differentiation in response to the TDIF signal. Acts redundantly with WOX14 downstream of the TDR/PXY receptor kinase to regulate procambial cell proliferation and differentiation in vascular tissue, independently of any role in vascular. Acts as a cambium regulator in the inflorescence stem. Is required for auxin-dependent cambium stimulation in the inflorescence stem. This Arabidopsis thaliana (Mouse-ear cress) protein is WUSCHEL-related homeobox 4 (WOX4).